Here is a 37-residue protein sequence, read N- to C-terminus: METVAYIGLGLCVLGVCLISWGLWDLARIIKSLHDTK.

The sequence is that of Protein 6.3 from Escherichia phage T7 (Bacteriophage T7).